The sequence spans 434 residues: Trigger factor (434 aa).

The PPIase FKBP-type domain occupies 161 to 246; it reads GDRVVIDFAG…VKGVEAPILP (86 aa).

Belongs to the FKBP-type PPIase family. Tig subfamily.

Its subcellular location is the cytoplasm. The catalysed reaction is [protein]-peptidylproline (omega=180) = [protein]-peptidylproline (omega=0). Functionally, involved in protein export. Acts as a chaperone by maintaining the newly synthesized protein in an open conformation. Functions as a peptidyl-prolyl cis-trans isomerase. The polypeptide is Trigger factor (Aromatoleum aromaticum (strain DSM 19018 / LMG 30748 / EbN1) (Azoarcus sp. (strain EbN1))).